The following is a 302-amino-acid chain: Protein transport protein SEC13 homolog B (302 aa).

WD repeat units follow at residues 9–48 (GHED…GSQQ), 54–95 (GHRG…QWTQ), 101–142 (DHKS…GWDT), 148–201 (AHPV…WKMD), 208–251 (KHTD…EQWE), and 257–296 (DFMT…EWEQ).

The protein belongs to the WD repeat SEC13 family. Part of the nuclear pore complex (NPC). The NPC has an eight-fold symmetrical structure comprising a central transport channel and two rings, the cytoplasmic and nuclear rings, to which eight filaments are attached. The cytoplasmic filaments have loose ends, while the nuclear filaments are joined in a distal ring, forming a nuclear basket. NPCs are highly dynamic in configuration and composition, and can be devided in 3 subcomplexes, the NUP62 subcomplex, the NUP107-160 subcomplex and the NUP93 subcomplex, containing approximately 30 different nucleoporin proteins. Interacts with MAG5, SEC31A and SEC31B.

The protein localises to the golgi apparatus. Its subcellular location is the endoplasmic reticulum. The protein resides in the nucleus envelope. It localises to the nucleus. It is found in the nuclear pore complex. In terms of biological role, required for protein transport from the endoplasmic reticulum to the Golgi apparatus. This chain is Protein transport protein SEC13 homolog B, found in Arabidopsis thaliana (Mouse-ear cress).